The chain runs to 477 residues: Tripartite motif-containing protein 72 (477 aa).

C14, C17, C29, H31, C34, C37, C53, C56, C86, H89, C97, D100, C105, C108, H114, and H117 together coordinate Zn(2+). Residues 14 to 57 (CPLCLQLFDAPVTAECGHSFCRACLGRVAGEPAADGTVLCPCCQ) form an RING-type zinc finger. The B box-type zinc-finger motif lies at 81-122 (VPQGHCEEHLDPLSIYCEQDRALVCGVCASLGSHRGHRLLPA). Residues 135 to 232 (QQKLQLQEAC…EKVLEEVADK (98 aa)) are a coiled coil. Position 144 is an S-nitrosocysteine (C144). Residue S255 is modified to Phosphoserine. In terms of domain architecture, B30.2/SPRY spans 271–475 (DFKFQVWRKM…PLLLVGPEGA (205 aa)).

The protein belongs to the TRIM/RBCC family. In terms of assembly, homodimer. Homooligomer; disulfide-linked. Oligomerizes on the phospholipid membrane. Interacts with DYSF and CAV3. In terms of processing, disulfide bond formation at Cys-242 occurs in case of membrane damage that cause the entry of the oxidized milieu of the extracellular space, resulting in homooligomerization. Post-translationally, S-nitrosylation at Cys-144 stabilizes TRIM72 and protects against oxidation-induced protein degradation and cell death.

It localises to the cell membrane. The protein resides in the sarcolemma. It is found in the cytoplasmic vesicle membrane. The catalysed reaction is S-ubiquitinyl-[E2 ubiquitin-conjugating enzyme]-L-cysteine + [acceptor protein]-L-lysine = [E2 ubiquitin-conjugating enzyme]-L-cysteine + N(6)-ubiquitinyl-[acceptor protein]-L-lysine.. It functions in the pathway protein modification; protein ubiquitination. Its activity is regulated as follows. Specifically binds phosphatidylserine. The binding to phospholipids enhances ubiquitination activity. Muscle-specific E3 ubiquitin-protein ligase that plays a central role in cell membrane repair by nucleating the assembly of the repair machinery at injury sites. Its ubiquitination activity is mediated by E2 ubiquitin-conjugating enzymes UBE2D1, UBE2D2 and UBE2D3. Acts as a sensor of oxidation: upon membrane damage, entry of extracellular oxidative environment results in disulfide bond formation and homooligomerization at the injury site. This oligomerization acts as a nucleation site for recruitment of TRIM72-containing vesicles to the injury site, leading to membrane patch formation. Probably acts upstream of the Ca(2+)-dependent membrane resealing process. Required for transport of DYSF to sites of cell injury during repair patch formation. Regulates membrane budding and exocytosis. May be involved in the regulation of the mobility of KCNB1-containing endocytic vesicles. This chain is Tripartite motif-containing protein 72, found in Homo sapiens (Human).